The sequence spans 624 residues: Ubiquitin carboxyl-terminal hydrolase 16 (624 aa).

One can recognise a USP domain in the interval 46–620; that stretch reads VGLSNPANDC…EVYLLFYEIE (575 aa). The Nucleophile role is filled by C55. H424 acts as the Proton acceptor in catalysis. The segment at 453–573 is disordered; sequence SENPSRVASP…ATDTEASASA (121 aa). The segment covering 479–496 has biased composition (low complexity); that stretch reads SPPASTSTNSPLSLTPDS. Over residues 518–544 the composition is skewed to polar residues; it reads VSFQSTHSSSKQTISPTSAARNSSSLD. Residues 546-573 show a composition bias toward low complexity; sequence ARLSSPASRSSLAERNASATDTEASASA.

This sequence belongs to the peptidase C19 family.

It catalyses the reaction Thiol-dependent hydrolysis of ester, thioester, amide, peptide and isopeptide bonds formed by the C-terminal Gly of ubiquitin (a 76-residue protein attached to proteins as an intracellular targeting signal).. This is Ubiquitin carboxyl-terminal hydrolase 16 (ubp16) from Emericella nidulans (strain FGSC A4 / ATCC 38163 / CBS 112.46 / NRRL 194 / M139) (Aspergillus nidulans).